A 317-amino-acid chain; its full sequence is Apolipoprotein E (317 aa).

Residues 1 to 18 (MKVLWAALLVTFLAGCQA) form the signal peptide. Tandem repeats lie at residues 80-101 (ALMD…EQLT), 102-123 (PVAE…ARLG), 124-145 (ADME…AMLG), 146-167 (QSTE…KRLL), 168-189 (RDAD…EGAE), 190-211 (RGVS…VRAA), 212-233 (TVGS…ERLR), and 234-255 (ARME…EQVA). The interval 80-255 (ALMDETMKEL…RLDEVKEQVA (176 aa)) is 8 X 22 AA approximate tandem repeats. Methionine 143 is subject to Methionine sulfoxide. Phosphoserine is present on serine 147. Residues 158 to 168 (HLRKLRKRLLR) are LDL and other lipoprotein receptors binding. Residue 162–165 (LRKR) participates in heparin binding. A lipid-binding and lipoprotein association region spans residues 210-290 (AATVGSVAGK…SWFEPLVEDM (81 aa)). Residue 229–236 (GERLRARM) participates in heparin binding. A homooligomerization region spans residues 266–317 (QQIRLQAEAFQARLKSWFEPLVEDMQRQWAGLVEKVQAAVGTSAAPVPSDNH). The interval 278–290 (RLKSWFEPLVEDM) is specificity for association with VLDL.

It belongs to the apolipoprotein A1/A4/E family. In terms of assembly, homotetramer. May interact with ABCA1; functionally associated with ABCA1 in the biogenesis of HDLs. May interact with APP/A4 amyloid-beta peptide; the interaction is extremely stable in vitro but its physiological significance is unclear. May interact with MAPT. May interact with MAP2. In the cerebrospinal fluid, interacts with secreted SORL1. Interacts with PMEL; this allows the loading of PMEL luminal fragment on ILVs to induce fibril nucleation. Post-translationally, APOE exists as multiple glycosylated and sialylated glycoforms within cells and in plasma. The extent of glycosylation and sialylation are tissue and context specific. In terms of processing, glycated in plasma VLDL. Phosphorylated by FAM20C in the extracellular medium.

The protein localises to the secreted. The protein resides in the extracellular space. It is found in the extracellular matrix. Its subcellular location is the extracellular vesicle. It localises to the endosome. The protein localises to the multivesicular body. APOE is an apolipoprotein, a protein associating with lipid particles, that mainly functions in lipoprotein-mediated lipid transport between organs via the plasma and interstitial fluids. APOE is a core component of plasma lipoproteins and is involved in their production, conversion and clearance. Apolipoproteins are amphipathic molecules that interact both with lipids of the lipoprotein particle core and the aqueous environment of the plasma. As such, APOE associates with chylomicrons, chylomicron remnants, very low density lipoproteins (VLDL) and intermediate density lipoproteins (IDL) but shows a preferential binding to high-density lipoproteins (HDL). It also binds a wide range of cellular receptors including the LDL receptor/LDLR, the LDL receptor-related proteins LRP1, LRP2 and LRP8 and the very low-density lipoprotein receptor/VLDLR that mediate the cellular uptake of the APOE-containing lipoprotein particles. Finally, APOE also has a heparin-binding activity and binds heparan-sulfate proteoglycans on the surface of cells, a property that supports the capture and the receptor-mediated uptake of APOE-containing lipoproteins by cells. A main function of APOE is to mediate lipoprotein clearance through the uptake of chylomicrons, VLDLs, and HDLs by hepatocytes. APOE is also involved in the biosynthesis by the liver of VLDLs as well as their uptake by peripheral tissues ensuring the delivery of triglycerides and energy storage in muscle, heart and adipose tissues. By participating in the lipoprotein-mediated distribution of lipids among tissues, APOE plays a critical role in plasma and tissues lipid homeostasis. APOE is also involved in two steps of reverse cholesterol transport, the HDLs-mediated transport of cholesterol from peripheral tissues to the liver, and thereby plays an important role in cholesterol homeostasis. First, it is functionally associated with ABCA1 in the biogenesis of HDLs in tissues. Second, it is enriched in circulating HDLs and mediates their uptake by hepatocytes. APOE also plays an important role in lipid transport in the central nervous system, regulating neuron survival and sprouting. The sequence is that of Apolipoprotein E (APOE) from Pongo pygmaeus (Bornean orangutan).